The following is a 496-amino-acid chain: UDP-N-acetylmuramoyl-L-alanyl-D-glutamate--2,6-diaminopimelate ligase (496 aa).

The UDP-N-acetyl-alpha-D-muramoyl-L-alanyl-D-glutamate site is built by Leu-24 and Ser-26. 109–115 (GTNGKTS) lines the ATP pocket. Residues 151-152 (TT), Ser-178, Gln-184, and Arg-186 each bind UDP-N-acetyl-alpha-D-muramoyl-L-alanyl-D-glutamate. Lys-218 carries the N6-carboxylysine modification. Meso-2,6-diaminopimelate-binding positions include Arg-387, 411 to 414 (DNPR), Gly-462, and Glu-466. The Meso-diaminopimelate recognition motif signature appears at 411 to 414 (DNPR).

Belongs to the MurCDEF family. MurE subfamily. It depends on Mg(2+) as a cofactor. Post-translationally, carboxylation is probably crucial for Mg(2+) binding and, consequently, for the gamma-phosphate positioning of ATP.

Its subcellular location is the cytoplasm. It catalyses the reaction UDP-N-acetyl-alpha-D-muramoyl-L-alanyl-D-glutamate + meso-2,6-diaminopimelate + ATP = UDP-N-acetyl-alpha-D-muramoyl-L-alanyl-gamma-D-glutamyl-meso-2,6-diaminopimelate + ADP + phosphate + H(+). Its pathway is cell wall biogenesis; peptidoglycan biosynthesis. Functionally, catalyzes the addition of meso-diaminopimelic acid to the nucleotide precursor UDP-N-acetylmuramoyl-L-alanyl-D-glutamate (UMAG) in the biosynthesis of bacterial cell-wall peptidoglycan. The sequence is that of UDP-N-acetylmuramoyl-L-alanyl-D-glutamate--2,6-diaminopimelate ligase from Pseudomonas putida (strain ATCC 47054 / DSM 6125 / CFBP 8728 / NCIMB 11950 / KT2440).